Reading from the N-terminus, the 147-residue chain is uncharacterized protein (147 aa).

This is an uncharacterized protein from Aedes vexans (Inland floodwater mosquito).